Consider the following 1188-residue polypeptide: Major DNA-binding protein (1188 aa).

The short motif at 838 to 839 is the Required for filament formation element; that stretch reads FW. The segment at 1145–1175 is disordered; that stretch reads CDDDDADKDAPHGAKSDVPNGDDEDVFAGPS. A required for nuclear localization region spans residues 1166–1188; sequence DDEDVFAGPSAKKRTLATEILFC.

It belongs to the herpesviridae major DNA-binding protein family. Homooligomers. Forms double-helical filaments necessary for the formation of replication compartments within the host nucleus. Interacts with the origin-binding protein. Interacts with the helicase primase complex; this interaction stimulates primer synthesis activity of the helicase-primase complex. Interacts with the DNA polymerase. Interacts with the alkaline exonuclease; this interaction increases its nuclease processivity.

It localises to the host nucleus. In terms of biological role, plays several crucial roles in viral infection. Participates in the opening of the viral DNA origin to initiate replication by interacting with the origin-binding protein. May disrupt loops, hairpins and other secondary structures present on ssDNA to reduce and eliminate pausing of viral DNA polymerase at specific sites during elongation. Promotes viral DNA recombination by performing strand-transfer, characterized by the ability to transfer a DNA strand from a linear duplex to a complementary single-stranded DNA circle. Can also catalyze the renaturation of complementary single strands. Additionally, reorganizes the host cell nucleus, leading to the formation of prereplicative sites and replication compartments. This process is driven by the protein which can form double-helical filaments in the absence of DNA. In Amazona oratrix (yellow-headed parrot), this protein is Major DNA-binding protein.